The sequence spans 206 residues: Urease accessory protein UreG (206 aa).

Gly14–Thr21 provides a ligand contact to GTP.

Belongs to the SIMIBI class G3E GTPase family. UreG subfamily. In terms of assembly, homodimer. UreD, UreF and UreG form a complex that acts as a GTP-hydrolysis-dependent molecular chaperone, activating the urease apoprotein by helping to assemble the nickel containing metallocenter of UreC. The UreE protein probably delivers the nickel.

The protein localises to the cytoplasm. Facilitates the functional incorporation of the urease nickel metallocenter. This process requires GTP hydrolysis, probably effectuated by UreG. This Methylocella silvestris (strain DSM 15510 / CIP 108128 / LMG 27833 / NCIMB 13906 / BL2) protein is Urease accessory protein UreG.